The sequence spans 1934 residues: Pyruvate dehydrogenase [NADP(+)] (1934 aa).

2 4Fe-4S ferredoxin-type domains span residues 710-739 (SIPI…PFLL) and 767-796 (YRIQ…MEGL). [4Fe-4S] cluster-binding residues include Cys719, Cys722, Cys725, Cys729, Cys776, Cys779, Cys782, and Cys786. One can recognise a Flavodoxin-like domain in the interval 1288–1438 (MHVLYGTETG…ELIEWLPDYL (151 aa)). The region spanning 1501–1759 (PNSVLLPVIE…NIKASAFNLP (259 aa)) is the FAD-binding FR-type domain. FAD contacts are provided by residues 1542 to 1553 (YCLGDSLALYGQ) and 1685 to 1695 (IKSRSYSIASC).

It in the N-terminal section; belongs to the pyruvate:ferredoxin/flavodoxin oxidoreductase family. As to quaternary structure, homodimer. Requires FAD as cofactor. FMN is required as a cofactor. Thiamine diphosphate serves as cofactor.

It catalyses the reaction pyruvate + NADP(+) + CoA = acetyl-CoA + CO2 + NADPH. May have an important role in respiratory metabolism. Cryptosporidium have a relic mitochondrion with no function in energy metabolism so it is not known if PFOR has a function. The polypeptide is Pyruvate dehydrogenase [NADP(+)] (PFOR) (Cryptosporidium parvum).